A 372-amino-acid polypeptide reads, in one-letter code: Protein RecA (372 aa).

Position 77–84 (G77–T84) interacts with ATP.

This sequence belongs to the RecA family.

The protein localises to the cytoplasm. In terms of biological role, can catalyze the hydrolysis of ATP in the presence of single-stranded DNA, the ATP-dependent uptake of single-stranded DNA by duplex DNA, and the ATP-dependent hybridization of homologous single-stranded DNAs. It interacts with LexA causing its activation and leading to its autocatalytic cleavage. This is Protein RecA from Corynebacterium diphtheriae (strain ATCC 700971 / NCTC 13129 / Biotype gravis).